The sequence spans 450 residues: Tubulin alpha-5 chain (450 aa).

GTP-binding residues include glutamine 11, glutamate 71, glycine 144, threonine 145, threonine 179, asparagine 206, and asparagine 228. Mg(2+) is bound at residue glutamate 71. Residue glutamate 254 is part of the active site.

This sequence belongs to the tubulin family. In terms of assembly, dimer of alpha and beta chains. A typical microtubule is a hollow water-filled tube with an outer diameter of 25 nm and an inner diameter of 15 nM. Alpha-beta heterodimers associate head-to-tail to form protofilaments running lengthwise along the microtubule wall with the beta-tubulin subunit facing the microtubule plus end conferring a structural polarity. Microtubules usually have 13 protofilaments but different protofilament numbers can be found in some organisms and specialized cells. Mg(2+) is required as a cofactor. In terms of processing, undergoes a tyrosination/detyrosination cycle, the cyclic removal and re-addition of a C-terminal tyrosine residue by the enzymes tubulin tyrosine carboxypeptidase (TTCP) and tubulin tyrosine ligase (TTL), respectively.

The protein resides in the cytoplasm. The protein localises to the cytoskeleton. It carries out the reaction GTP + H2O = GDP + phosphate + H(+). Functionally, tubulin is the major constituent of microtubules, a cylinder consisting of laterally associated linear protofilaments composed of alpha- and beta-tubulin heterodimers. Microtubules grow by the addition of GTP-tubulin dimers to the microtubule end, where a stabilizing cap forms. Below the cap, tubulin dimers are in GDP-bound state, owing to GTPase activity of alpha-tubulin. This chain is Tubulin alpha-5 chain (TUBA5), found in Zea mays (Maize).